The chain runs to 354 residues: S-adenosylmethionine:tRNA ribosyltransferase-isomerase (354 aa).

Belongs to the QueA family. Monomer.

It localises to the cytoplasm. It catalyses the reaction 7-aminomethyl-7-carbaguanosine(34) in tRNA + S-adenosyl-L-methionine = epoxyqueuosine(34) in tRNA + adenine + L-methionine + 2 H(+). It participates in tRNA modification; tRNA-queuosine biosynthesis. Transfers and isomerizes the ribose moiety from AdoMet to the 7-aminomethyl group of 7-deazaguanine (preQ1-tRNA) to give epoxyqueuosine (oQ-tRNA). This is S-adenosylmethionine:tRNA ribosyltransferase-isomerase from Salmonella heidelberg (strain SL476).